Consider the following 678-residue polypeptide: Probable 3',5'-cyclic phosphodiesterase pde-3 (678 aa).

Disordered regions lie at residues 1–27, 52–95, and 223–250; these read MSPGPPAVGGVSPPVMVPGSAPPFQPT, AEMR…VLGG, and TVPAEPNKARSSSYWKTEASPSNNNEHE. A compositionally biased stretch (low complexity) spans 7–19; sequence AVGGVSPPVMVPG. Composition is skewed to polar residues over residues 60 to 85 and 231 to 246; these read TATSSPASSGVSIQQRRGSTTQNSGV and ARSSSYWKTEASPSNN. A PDEase domain is found at 281-632; that stretch reads RYDTRELDTD…RKWKEQIELE (352 aa). The active-site Proton donor is the His356. His360, His421, Asp422, and Asp531 together coordinate a divalent metal cation. The interval 654-678 is disordered; it reads EEESASTSDSPDPRRDSPLDSDLSQ.

This sequence belongs to the cyclic nucleotide phosphodiesterase family. A divalent metal cation serves as cofactor.

It catalyses the reaction a nucleoside 3',5'-cyclic phosphate + H2O = a nucleoside 5'-phosphate + H(+). The polypeptide is Probable 3',5'-cyclic phosphodiesterase pde-3 (pde-3) (Caenorhabditis elegans).